The chain runs to 331 residues: ADP-L-glycero-D-manno-heptose-6-epimerase (331 aa).

NADP(+) contacts are provided by residues 11 to 12 (FI), 32 to 33 (DN), K39, K54, 75 to 79 (EGACS), and N92. Catalysis depends on Y139, which acts as the Proton acceptor. NADP(+) is bound at residue K143. N168 is a substrate binding site. Residues V169 and K177 each coordinate NADP(+). The active-site Proton acceptor is K177. Substrate-binding positions include R179, H186, 200–203 (FGEY), R213, and Y292.

The protein belongs to the NAD(P)-dependent epimerase/dehydratase family. HldD subfamily. Homopentamer. NADP(+) serves as cofactor.

It catalyses the reaction ADP-D-glycero-beta-D-manno-heptose = ADP-L-glycero-beta-D-manno-heptose. It participates in nucleotide-sugar biosynthesis; ADP-L-glycero-beta-D-manno-heptose biosynthesis; ADP-L-glycero-beta-D-manno-heptose from D-glycero-beta-D-manno-heptose 7-phosphate: step 4/4. In terms of biological role, catalyzes the interconversion between ADP-D-glycero-beta-D-manno-heptose and ADP-L-glycero-beta-D-manno-heptose via an epimerization at carbon 6 of the heptose. This chain is ADP-L-glycero-D-manno-heptose-6-epimerase, found in Cupriavidus necator (strain ATCC 17699 / DSM 428 / KCTC 22496 / NCIMB 10442 / H16 / Stanier 337) (Ralstonia eutropha).